We begin with the raw amino-acid sequence, 129 residues long: Virion-associated protein (129 aa).

Coiled-coil stretches lie at residues 1-31 (MANL…ILEL) and 38-59 (TKES…LIND). The tract at residues 122–129 (PAGWPNQF) is capsid binding.

The protein belongs to the caulimovirus ORF III family. In terms of assembly, homotetramer, through coiled-coil domain. Homotrimer when interacts with icosehadral capsid. Interacts with capsid protein, and with Movement protein.

It localises to the virion. The protein resides in the host cell junction. The protein localises to the host plasmodesma. In terms of biological role, plays a role in virus cell-to-cell and plant-to-plant transmission. Interacts with virion icosahedral capsid and movement protein, thereby facilitating virion cell-to-cell transmission through plasmodesmata opened by viral movement protein. Also interacts with aphid transmission factor, attaching the virion to aphid stylet when the animal feeds on an virus infected plant. Aphid saliva may later detach the virion, inducing release of infectious particles when the animal feeds on a new plant. In Arabidopsis thaliana (Mouse-ear cress), this protein is Virion-associated protein.